We begin with the raw amino-acid sequence, 169 residues long: Nucleoside diphosphate kinase 3 (169 aa).

ADP is bound by residues K29, R105, T111, R122, V129, and N132. Catalysis depends on H135, which acts as the Pros-phosphohistidine intermediate.

The protein belongs to the NDK family. Homohexamer. Interacts (via its N-terminal region) with KAT5; this interaction enables recruitment of NME3 at DNA damage sites where it plays a role in the repair of DNA. Found in association with several ciliary nephronophthisis proteins, including NEK8, CEP164, ANKS6. It depends on Mg(2+) as a cofactor.

Its subcellular location is the mitochondrion outer membrane. It localises to the cytoplasm. The protein resides in the cytoskeleton. The protein localises to the cilium basal body. It catalyses the reaction a 2'-deoxyribonucleoside 5'-diphosphate + ATP = a 2'-deoxyribonucleoside 5'-triphosphate + ADP. It carries out the reaction a ribonucleoside 5'-diphosphate + ATP = a ribonucleoside 5'-triphosphate + ADP. In terms of biological role, catalyzes the phosphorylation of ribonucleosides and deoxyribonucleoside diphosphates, other than ATP, into the corresponding triphosphates with ATP as the major phosphate donor. The ATP gamma phosphate is transferred to the nucleoside diphosphate beta phosphate via a ping-pong mechanism, using a phosphorylated active-site intermediate. Through the catalyzed exchange of gamma-phosphate between di- and triphosphonucleosides participates in regulation of intracellular nucleotide homeostasis. Inhibits granulocyte differentiation. May be required for ciliary function during renal development. Its function is as follows. Independently of its kinase activity, facilitates mitochondrial tethering prior to membrane fusion through its direct membrane-binding and hexamerization. Implicated in repair of both single- and double-stranded breaks in DNA through its association with the ribonucleotide reductase complex (RNR complex) via its interaction with the histone acetyltransferase KAT5, this interaction enables recruitment of NME3 at DNA damage sites where it plays a role in the repair of DNA, independently of its kinase activity. This chain is Nucleoside diphosphate kinase 3, found in Homo sapiens (Human).